The sequence spans 150 residues: uncharacterized protein (150 aa).

Polar residues predominate over residues 81-90; that stretch reads TTKPSCSFAQ. The disordered stretch occupies residues 81-125; sequence TTKPSCSFAQPVTPRTREGAGVRGHRRRRRGSLSLIPWKTSNDKQ.

This is an uncharacterized protein from Homo sapiens (Human).